Reading from the N-terminus, the 119-residue chain is Large ribosomal subunit protein bL20 (119 aa).

Belongs to the bacterial ribosomal protein bL20 family.

Its function is as follows. Binds directly to 23S ribosomal RNA and is necessary for the in vitro assembly process of the 50S ribosomal subunit. It is not involved in the protein synthesizing functions of that subunit. The chain is Large ribosomal subunit protein bL20 from Enterococcus faecalis (strain ATCC 700802 / V583).